We begin with the raw amino-acid sequence, 30 residues long: Cycloviolacin-O4 (30 aa).

The segment at residues 1–30 is a cross-link (cyclopeptide (Gly-Asn)); the sequence is GIPCGESCVWIPCISSAIGCSCKNKVCYRN. Disulfide bonds link cysteine 4/cysteine 20, cysteine 8/cysteine 22, and cysteine 13/cysteine 27.

This is a cyclic peptide. In terms of tissue distribution, expressed in petals, petioles, roots and runners but not in leaves (at protein level).

Its function is as follows. Probably participates in a plant defense mechanism. In Viola odorata (Sweet violet), this protein is Cycloviolacin-O4.